The primary structure comprises 170 residues: Peptide deformylase (170 aa).

Fe cation is bound by residues cysteine 94 and histidine 136. Glutamate 137 is an active-site residue. A Fe cation-binding site is contributed by histidine 140.

It belongs to the polypeptide deformylase family. Fe(2+) is required as a cofactor.

The enzyme catalyses N-terminal N-formyl-L-methionyl-[peptide] + H2O = N-terminal L-methionyl-[peptide] + formate. Removes the formyl group from the N-terminal Met of newly synthesized proteins. Requires at least a dipeptide for an efficient rate of reaction. N-terminal L-methionine is a prerequisite for activity but the enzyme has broad specificity at other positions. The chain is Peptide deformylase from Stenotrophomonas maltophilia (strain K279a).